Consider the following 395-residue polypeptide: Elongation factor Tu (395 aa).

The tr-type G domain occupies 10 to 204; it reads KPHVNIGTIG…TVDSYIPEPK (195 aa). The segment at 19-26 is G1; sequence GHVDHGKT. A GTP-binding site is contributed by 19 to 26; sequence GHVDHGKT. T26 lines the Mg(2+) pocket. A G2 region spans residues 60–64; sequence GITIN. Residues 81 to 84 form a G3 region; the sequence is DAPG. GTP-binding positions include 81–85 and 136–139; these read DAPGH and NKTD. A G4 region spans residues 136-139; that stretch reads NKTD. Positions 174–176 are G5; it reads SAL.

It belongs to the TRAFAC class translation factor GTPase superfamily. Classic translation factor GTPase family. EF-Tu/EF-1A subfamily. Monomer.

It localises to the cytoplasm. The catalysed reaction is GTP + H2O = GDP + phosphate + H(+). In terms of biological role, GTP hydrolase that promotes the GTP-dependent binding of aminoacyl-tRNA to the A-site of ribosomes during protein biosynthesis. This Leuconostoc citreum (strain KM20) protein is Elongation factor Tu.